Here is a 425-residue protein sequence, read N- to C-terminus: CinA-like protein (425 aa).

Belongs to the CinA family.

The chain is CinA-like protein from Desulfovibrio desulfuricans (strain ATCC 27774 / DSM 6949 / MB).